Here is a 595-residue protein sequence, read N- to C-terminus: MRFTSTILLRVAVLLSLGGGSQTTSCTPGQPFPIPAYSKTSLQQTFEQIFETVSRSFDNESFHSTNVAIEVTSSQETLWSFYHAAKNQSSQDGSTVIGPDTVFRVARVSKLLTAIAILQLHDQGHISSLYDPINIYIPDLDPSTVQWGRITIWDLLNNVAGILDMYGYADIYTDFSARQRADLNLPPVPEDSLEGMPACQVDKSIPCDSAGLLSWLRSSRAVFEPHRINSNSNVGFSLLGILIERITGIDYERFISQTLIEPLHLNSTSFRPPHKNSGAVLQNDHTWNWDVGVNNPSVGLYSTPRDISTLLRWTLNESPSSLLNWFAPGFYAVGSHSLIGMPWNIFRTTAPLSIPNRPTTFNTVVGTLGPYTSVVVVMPEYDLAVSLMMNGALGHPHDILAKVTFPLVRAADKIALEKVRDNYAGTYKAEPRQKINSSITLSVSPDHGLYISELISNGSSILPVMERLASSKSGGGSNWIFQAVPTFLETKRRRTPHDRVVVNEEWRWTYVLDKPPGEGWNDWCLSSFDPVTYAGEPLTKMVFQKDAKSGRVLSVALSGYNITLPKGVQEAGIFAQLEGTSLDLHAQAGQEVLAG.

A signal peptide spans 1 to 23 (MRFTSTILLRVAVLLSLGGGSQT). Asn-59, Asn-87, Asn-266, Asn-436, Asn-457, and Asn-561 each carry an N-linked (GlcNAc...) asparagine glycan.

It belongs to the beta-lactamase family.

Its pathway is secondary metabolite biosynthesis. Probable hydrolase; part of the gene cluster that mediates the biosynthesis of squalestatin S1 (SQS1, also known as zaragozic acid A), a heavily oxidized fungal polyketide that offers potent cholesterol lowering activity by targeting squalene synthase (SS). SQS1 is composed of a 2,8-dioxobicyclic[3.2.1]octane-3,4,5-tricarboxyclic acid core that is connected to two lipophilic polyketide arms. These initial steps feature the priming of an unusual benzoic acid starter unit onto the highly reducing polyketide synthase pks2, followed by oxaloacetate extension and product release to generate a tricarboxylic acid containing product. The phenylalanine ammonia lyase (PAL) M7 and the acyl-CoA ligase M9 are involved in transforming phenylalanine into benzoyl-CoA. The citrate synthase-like protein R3 is involved in connecting the C-alpha-carbons of the hexaketide chain and oxaloacetate to afford the tricarboxylic acid unit. The potential hydrolytic enzymes, M8 and M10, are in close proximity to pks2 and may participate in product release. On the other side, the tetraketide arm is synthesized by a the squalestatin tetraketide synthase pks1 and enzymatically esterified to the core in the last biosynthetic step, by the acetyltransferase M4. The biosynthesis of the tetraketide must involve 3 rounds of chain extension. After the first and second rounds methyl-transfer occurs, and in all rounds of extension the ketoreductase and dehydratase are active. The enoyl reductase and C-MeT of pks1 are not active in the final round of extension. The acetyltransferase M4 appears to have a broad substrate selectivity for its acyl CoA substrate, allowing the in vitro synthesis of novel squalestatins. The biosynthesis of SQS1 requires several oxidative steps likely performed by oxidoreductases M1, R1 and R2. Finally, in support of the identification of the cluster as being responsible for SQS1 production, the cluster contains a gene encoding a putative squalene synthase (SS) R6, suggesting a likely mechanism for self-resistance. This Phoma sp. (strain ATCC 20986 / MF5453) protein is Probable hydrolase M10.